Here is a 285-residue protein sequence, read N- to C-terminus: Phosphatidylglycerol--prolipoprotein diacylglyceryl transferase (285 aa).

Helical transmembrane passes span 26-46 (IALHWYGLGYVVGILFSWWYV), 71-91 (FVVWAALGIVVGGRLGQVLIW), 107-127 (WDGGMSFHGGLIGTTIAIIWF), and 133-153 (INIWAMFDTIAAGAPFGIGVV). A 1,2-diacyl-sn-glycero-3-phospho-(1'-sn-glycerol) is bound at residue Arg154. The next 3 membrane-spanning stretches (helical) occupy residues 194–214 (LMEGFLLFIVLAFIIFAFKAF), 218–238 (GTVAGTFIISYGIARTISEIF), and 256–276 (GFTYGMALSLPMILFGFYAIF).

This sequence belongs to the Lgt family.

Its subcellular location is the cell inner membrane. It carries out the reaction L-cysteinyl-[prolipoprotein] + a 1,2-diacyl-sn-glycero-3-phospho-(1'-sn-glycerol) = an S-1,2-diacyl-sn-glyceryl-L-cysteinyl-[prolipoprotein] + sn-glycerol 1-phosphate + H(+). It participates in protein modification; lipoprotein biosynthesis (diacylglyceryl transfer). Catalyzes the transfer of the diacylglyceryl group from phosphatidylglycerol to the sulfhydryl group of the N-terminal cysteine of a prolipoprotein, the first step in the formation of mature lipoproteins. The sequence is that of Phosphatidylglycerol--prolipoprotein diacylglyceryl transferase from Bartonella bacilliformis (strain ATCC 35685 / KC583 / Herrer 020/F12,63).